Here is a 324-residue protein sequence, read N- to C-terminus: Protein FAM228B (324 aa).

This sequence belongs to the FAM228 family.

In Homo sapiens (Human), this protein is Protein FAM228B (FAM228B).